The primary structure comprises 311 residues: DNA replication terminus site-binding protein (311 aa).

This sequence belongs to the Tus family.

Its subcellular location is the cytoplasm. Functionally, trans-acting protein required for termination of DNA replication. Binds to DNA replication terminator sequences (terA to terF) to prevent the passage of replication forks. The termination efficiency will be affected by the affinity of this protein for the terminator sequence. This chain is DNA replication terminus site-binding protein, found in Yersinia pestis.